The sequence spans 128 residues: MAIWQGASRRLSTGAKVWRAAKKHKREMGRPAAETQVSDKIKRKIVRCRGANLKVKLEKTNYANVFDQANKVCKKVVVTNVIDNKANKHYIRRNVMTKGAIIETEMGKAKVTSRPGQDGVVNAILLTE.

The protein belongs to the eukaryotic ribosomal protein eS8 family. As to quaternary structure, part of the 30S ribosomal subunit.

In Methanococcus maripaludis (strain DSM 14266 / JCM 13030 / NBRC 101832 / S2 / LL), this protein is Small ribosomal subunit protein eS8.